Consider the following 247-residue polypeptide: 3-deoxy-manno-octulosonate cytidylyltransferase (247 aa).

Belongs to the KdsB family.

Its subcellular location is the cytoplasm. It carries out the reaction 3-deoxy-alpha-D-manno-oct-2-ulosonate + CTP = CMP-3-deoxy-beta-D-manno-octulosonate + diphosphate. The protein operates within nucleotide-sugar biosynthesis; CMP-3-deoxy-D-manno-octulosonate biosynthesis; CMP-3-deoxy-D-manno-octulosonate from 3-deoxy-D-manno-octulosonate and CTP: step 1/1. Its pathway is bacterial outer membrane biogenesis; lipopolysaccharide biosynthesis. Its function is as follows. Activates KDO (a required 8-carbon sugar) for incorporation into bacterial lipopolysaccharide in Gram-negative bacteria. This is 3-deoxy-manno-octulosonate cytidylyltransferase from Chlorobium phaeobacteroides (strain DSM 266 / SMG 266 / 2430).